A 335-amino-acid polypeptide reads, in one-letter code: uncharacterized protein (335 aa).

Solcar repeat units follow at residues 22–129 (VKPI…LLPL), 134–227 (GFPA…IRLF), and 244–327 (KDLY…TKKY). 6 consecutive transmembrane segments (helical) span residues 28–48 (MLSA…LDVV), 104–123 (GLVP…FLGY), 133–154 (WGFP…ATIV), 195–219 (GILN…FYWW), 246–263 (LYIN…ATLL), and 307–323 (CVKV…SYHL).

Belongs to the mitochondrial carrier (TC 2.A.29) family.

Its subcellular location is the mitochondrion inner membrane. This is an uncharacterized protein from Schizosaccharomyces pombe (strain 972 / ATCC 24843) (Fission yeast).